Reading from the N-terminus, the 148-residue chain is Deoxyuridine 5'-triphosphate nucleotidohydrolase (148 aa).

Substrate-binding positions include 67–69 (RSG), Asn80, 84–86 (TID), and Lys94.

This sequence belongs to the dUTPase family. Mg(2+) is required as a cofactor.

The catalysed reaction is dUTP + H2O = dUMP + diphosphate + H(+). It functions in the pathway pyrimidine metabolism; dUMP biosynthesis; dUMP from dCTP (dUTP route): step 2/2. In terms of biological role, this enzyme is involved in nucleotide metabolism: it produces dUMP, the immediate precursor of thymidine nucleotides and it decreases the intracellular concentration of dUTP so that uracil cannot be incorporated into DNA. In Orientia tsutsugamushi (strain Boryong) (Rickettsia tsutsugamushi), this protein is Deoxyuridine 5'-triphosphate nucleotidohydrolase.